We begin with the raw amino-acid sequence, 266 residues long: 3-methyl-2-oxobutanoate hydroxymethyltransferase (266 aa).

The Mg(2+) site is built by aspartate 45 and aspartate 84. 3-methyl-2-oxobutanoate-binding positions include 45 to 46, aspartate 84, and lysine 112; that span reads DS. Glutamate 114 serves as a coordination point for Mg(2+). Catalysis depends on glutamate 181, which acts as the Proton acceptor.

Belongs to the PanB family. As to quaternary structure, homodecamer; pentamer of dimers. Requires Mg(2+) as cofactor.

The protein localises to the cytoplasm. The enzyme catalyses 3-methyl-2-oxobutanoate + (6R)-5,10-methylene-5,6,7,8-tetrahydrofolate + H2O = 2-dehydropantoate + (6S)-5,6,7,8-tetrahydrofolate. It functions in the pathway cofactor biosynthesis; (R)-pantothenate biosynthesis; (R)-pantoate from 3-methyl-2-oxobutanoate: step 1/2. In terms of biological role, catalyzes the reversible reaction in which hydroxymethyl group from 5,10-methylenetetrahydrofolate is transferred onto alpha-ketoisovalerate to form ketopantoate. In Pseudomonas syringae pv. tomato (strain ATCC BAA-871 / DC3000), this protein is 3-methyl-2-oxobutanoate hydroxymethyltransferase.